Reading from the N-terminus, the 428-residue chain is Sporulation kinase B (428 aa).

Topologically, residues 1–6 are cytoplasmic; that stretch reads MEILKD. A helical transmembrane segment spans residues 7–27; the sequence is YLLHICFILFPILLYQVFWLG. The Extracellular portion of the chain corresponds to 28 to 37; that stretch reads KPAILVPKIN. The helical transmembrane segment at 38–58 threads the bilayer; it reads SGLVTLFACGASVLCIIFPIH. Residues 59–68 are Cytoplasmic-facing; sequence EMDYIQYGLQ. Residues 69–89 form a helical membrane-spanning segment; it reads MIPVIICLFYISTASGLTVAA. Over 90-99 the chain is Extracellular; that stretch reads SVLCFELLFY. Residues 100-120 traverse the membrane as a helical segment; the sequence is EPSAMFVFTLLPFLIIIPILF. Topologically, residues 121–132 are cytoplasmic; it reads QKKWPFMSKAKK. Residues 133–153 form a helical membrane-spanning segment; that stretch reads LLLSLLISCVEIFLFFASSWI. Topologically, residues 154–166 are extracellular; the sequence is LSALNILNFQKSG. Residues 167 to 187 traverse the membrane as a helical segment; that stretch reads IFVYEAAVSGLFRSSVLLLSI. At 188 to 428 the chain is on the cytoplasmic side; that stretch reads YIIESIAENI…TIKLPADLPH (241 aa). The region spanning 218-426 is the Histidine kinase domain; that stretch reads SVAHEVRNPL…TVTIKLPADL (209 aa). A Phosphohistidine; by autocatalysis modification is found at His-221.

It is found in the cell membrane. It catalyses the reaction ATP + protein L-histidine = ADP + protein N-phospho-L-histidine.. Phosphorylates the sporulation-regulatory proteins spo0A and spo0F. Spo0F is required for the KinB activity. The protein is Sporulation kinase B (kinB) of Bacillus subtilis (strain 168).